A 135-amino-acid polypeptide reads, in one-letter code: Large ribosomal subunit protein uL16c (135 aa).

Belongs to the universal ribosomal protein uL16 family. As to quaternary structure, part of the 50S ribosomal subunit.

It is found in the plastid. Its subcellular location is the chloroplast. This is Large ribosomal subunit protein uL16c from Piper cenocladum (Ant piper).